Reading from the N-terminus, the 56-residue chain is Light-harvesting protein B-880 beta chain (56 aa).

The Cytoplasmic segment spans residues 1–22 (AEIDRPVSLSGLTEGEAREFHG). Residues H21 and H39 each coordinate a bacteriochlorophyll. Residues 23-45 (VFMTSFMVFIAVAIVAHILAWMW) traverse the membrane as a helical segment. At 46–56 (RPWIPGPEGYA) the chain is on the periplasmic side.

This sequence belongs to the antenna complex beta subunit family. As to quaternary structure, the core complex is formed by different alpha and beta chains, binding bacteriochlorophyll molecules, and arranged most probably in tetrameric structures disposed around the reaction center. The non-pigmented gamma chains may constitute additional components.

The protein resides in the cell inner membrane. Antenna complexes are light-harvesting systems, which transfer the excitation energy to the reaction centers. This is Light-harvesting protein B-880 beta chain from Afifella marina (Rhodobium marinum).